The chain runs to 191 residues: Prostaglandin-H2 D-isomerase (191 aa).

Positions 1–24 (MGALCTLWLGLVLLGVLGALQTSA) are cleaved as a signal peptide. Gln25 bears the Pyrrolidone carboxylic acid mark. Residue Asn51 is glycosylated (N-linked (GlcNAc...) asparagine). Cys65 serves as the catalytic Nucleophile. N-linked (GlcNAc...) asparagine glycosylation is present at Asn78. Cys89 and Cys186 form a disulfide bridge.

This sequence belongs to the calycin superfamily. Lipocalin family. As to quaternary structure, monomer. N- and O-glycosylated. Both N-glycosylation recognition sites are almost quantitatively occupied by N-glycans of the biantennary complex type, with a considerable proportion of structures bearing a bisecting GlcNAc. N-glycan at Asn-78: dHex1Hex5HexNAc4. Agalacto structure as well as sialylated and nonsialylated oligosaccharides bearing alpha2-3- and/or alpha2-6-linked NeuNAc are present.

It is found in the rough endoplasmic reticulum. The protein localises to the nucleus membrane. It localises to the golgi apparatus. The protein resides in the cytoplasm. Its subcellular location is the perinuclear region. It is found in the secreted. The catalysed reaction is prostaglandin H2 = prostaglandin D2. In terms of biological role, catalyzes the conversion of PGH2 to PGD2, a prostaglandin involved in smooth muscle contraction/relaxation and a potent inhibitor of platelet aggregation. Involved in a variety of CNS functions, such as sedation, NREM sleep and PGE2-induced allodynia, and may have an anti-apoptotic role in oligodendrocytes. Binds small non-substrate lipophilic molecules, including biliverdin, bilirubin, retinal, retinoic acid and thyroid hormone, and may act as a scavenger for harmful hydrophobic molecules and as a secretory retinoid and thyroid hormone transporter. Possibly involved in development and maintenance of the blood-brain, blood-retina, blood-aqueous humor and blood-testis barrier. It is likely to play important roles in both maturation and maintenance of the central nervous system and male reproductive system. Involved in PLA2G3-dependent maturation of mast cells. PLA2G3 is secreted by immature mast cells and acts on nearby fibroblasts upstream to PTDGS to synthesize PGD2, which in turn promotes mast cell maturation and degranulation via PTGDR. This is Prostaglandin-H2 D-isomerase (PTGDS) from Canis lupus familiaris (Dog).